A 427-amino-acid polypeptide reads, in one-letter code: Acyltransferase fer5 (427 aa).

Residues 1–24 (MTAATSVQPSPAPRQPGLRATFNP) are disordered. His342 is a binding site for substrate. The active-site Proton acceptor is Glu380.

The protein belongs to the lysine N-acyltransferase mbtK family.

The protein operates within siderophore biosynthesis. Its function is as follows. Acyltransferase; part of the gene cluster that mediates the biosynthesis of siderophore ferrichrome A which is contributing to organismal virulence. The first step of ferrichrome A biosynthesis is performed by the HMG-CoA synthase hcs1 which catalyzes the generation of HMG-CoA and CoA using acetoacetyl-CoA and acetyl-CoA as substrates. The enoyl-CoA isomerase/hydratase fer4 then catalyzes the conversion of hcs1-produced HMG-CoA to methylglutaconyl-CoA. The acyltransferase fer5 then fuses the fer4-generated methylglutaconyl-CoA with sid1-generated hydroxyornithine to yield methylglutaconyl hydroxyornithine. Methylglutaconyl hydroxyornithine is then available for use by the NRPS fer3 to generate ferrichrome A. The protein is Acyltransferase fer5 of Mycosarcoma maydis (Corn smut fungus).